The chain runs to 242 residues: Ubiquinone/menaquinone biosynthesis C-methyltransferase UbiE (242 aa).

Residues Thr69, Asp87, and Asn114–Ala115 contribute to the S-adenosyl-L-methionine site.

Belongs to the class I-like SAM-binding methyltransferase superfamily. MenG/UbiE family.

It carries out the reaction a 2-demethylmenaquinol + S-adenosyl-L-methionine = a menaquinol + S-adenosyl-L-homocysteine + H(+). The enzyme catalyses a 2-methoxy-6-(all-trans-polyprenyl)benzene-1,4-diol + S-adenosyl-L-methionine = a 5-methoxy-2-methyl-3-(all-trans-polyprenyl)benzene-1,4-diol + S-adenosyl-L-homocysteine + H(+). It participates in quinol/quinone metabolism; menaquinone biosynthesis; menaquinol from 1,4-dihydroxy-2-naphthoate: step 2/2. The protein operates within cofactor biosynthesis; ubiquinone biosynthesis. Its function is as follows. Methyltransferase required for the conversion of demethylmenaquinol (DMKH2) to menaquinol (MKH2) and the conversion of 2-polyprenyl-6-methoxy-1,4-benzoquinol (DDMQH2) to 2-polyprenyl-3-methyl-6-methoxy-1,4-benzoquinol (DMQH2). The protein is Ubiquinone/menaquinone biosynthesis C-methyltransferase UbiE of Zymomonas mobilis subsp. mobilis (strain ATCC 31821 / ZM4 / CP4).